The sequence spans 481 residues: UDP-N-acetylmuramoyl-L-alanyl-D-glutamate--L-lysine ligase (481 aa).

UDP-N-acetyl-alpha-D-muramoyl-L-alanyl-D-glutamate is bound at residue Ser-42. ATP is bound at residue 118–124 (GTKGKTT). Residues 160-161 (TT), Ser-187, and Arg-195 contribute to the UDP-N-acetyl-alpha-D-muramoyl-L-alanyl-D-glutamate site. Lys-229 bears the N6-carboxylysine mark. The L-lysine recognition motif signature appears at 404 to 407 (DDPN).

The protein belongs to the MurCDEF family. MurE subfamily. In terms of processing, carboxylation is probably crucial for Mg(2+) binding and, consequently, for the gamma-phosphate positioning of ATP.

The protein localises to the cytoplasm. It catalyses the reaction UDP-N-acetyl-alpha-D-muramoyl-L-alanyl-D-glutamate + L-lysine + ATP = UDP-N-acetyl-alpha-D-muramoyl-L-alanyl-gamma-D-glutamyl-L-lysine + ADP + phosphate + H(+). It participates in cell wall biogenesis; peptidoglycan biosynthesis. Its function is as follows. Catalyzes the addition of L-lysine to the nucleotide precursor UDP-N-acetylmuramoyl-L-alanyl-D-glutamate (UMAG) in the biosynthesis of bacterial cell-wall peptidoglycan. In Streptococcus suis (strain 98HAH33), this protein is UDP-N-acetylmuramoyl-L-alanyl-D-glutamate--L-lysine ligase.